Consider the following 388-residue polypeptide: Cell adhesion molecule 4 (388 aa).

An N-terminal signal peptide occupies residues M1–G20. The Ig-like V-type domain maps to P21–T119. Residues Q25 to A324 are Extracellular-facing. N31 and N67 each carry an N-linked (GlcNAc...) asparagine glycan. Intrachain disulfides connect C44-C104, C145-C199, and C245-C291. Ig-like C2-type domains follow at residues P124 to D219 and P224 to V307. A glycan (N-linked (GlcNAc...) asparagine) is linked at N286. The chain crosses the membrane as a helical span at residues I325–V345. Residues W346–I388 are Cytoplasmic-facing. S361 is modified (phosphoserine).

The protein belongs to the nectin family. Monomer and homodimer. In terms of processing, N-glycosylated.

The protein resides in the membrane. In terms of biological role, involved in the cell-cell adhesion. Has calcium- and magnesium-independent cell-cell adhesion activity. May have tumor-suppressor activity. The chain is Cell adhesion molecule 4 (Cadm4) from Rattus norvegicus (Rat).